A 260-amino-acid chain; its full sequence is HTH-type transcriptional repressor NanR (260 aa).

Residues 1–20 (MNPFDSQSEDASDAIGRSLG) form a disordered region. Residues 27-95 (KKLSEMVEEE…NGERARVSRP (69 aa)) form the HTH gntR-type domain. The segment at residues 55 to 74 (ERELMAFFNVGRPSVREALA) is a DNA-binding region (H-T-H motif).

It belongs to the NanR family.

Functionally, transcriptional repressor that controls expression of the genes required for the catabolism of sialic acids. The sequence is that of HTH-type transcriptional repressor NanR from Cronobacter sakazakii (strain ATCC BAA-894) (Enterobacter sakazakii).